A 147-amino-acid polypeptide reads, in one-letter code: 3-dehydroquinate dehydratase (147 aa).

Tyr26 (proton acceptor) is an active-site residue. Residues Asn77, His83, and Asp90 each coordinate substrate. His103 acts as the Proton donor in catalysis. Residues 104 to 105 (LS) and Arg114 contribute to the substrate site.

This sequence belongs to the type-II 3-dehydroquinase family. Homododecamer.

It carries out the reaction 3-dehydroquinate = 3-dehydroshikimate + H2O. It participates in metabolic intermediate biosynthesis; chorismate biosynthesis; chorismate from D-erythrose 4-phosphate and phosphoenolpyruvate: step 3/7. In terms of biological role, catalyzes a trans-dehydration via an enolate intermediate. The chain is 3-dehydroquinate dehydratase from Proteus mirabilis (strain HI4320).